We begin with the raw amino-acid sequence, 300 residues long: 5'-adenylylsulfate reductase-like 5 (300 aa).

The signal sequence occupies residues 1–23; sequence MDSRVSILFVCAIAVSCFTSGSA. The region spanning 41-161 is the Thioredoxin domain; that stretch reads FDLEAKCPPS…LIEFYEEATG (121 aa). Residue asparagine 136 is glycosylated (N-linked (GlcNAc...) asparagine). Residues 202 to 222 traverse the membrane as a helical segment; it reads FLVLSLLFICLQMAILVFPIA.

It is found in the membrane. In Arabidopsis thaliana (Mouse-ear cress), this protein is 5'-adenylylsulfate reductase-like 5 (APRL5).